The following is a 318-amino-acid chain: Ribosomal RNA small subunit methyltransferase H (318 aa).

S-adenosyl-L-methionine is bound by residues 37–39 (GGH), Asp-57, Phe-83, Asp-104, and Gln-111.

This sequence belongs to the methyltransferase superfamily. RsmH family.

The protein localises to the cytoplasm. The enzyme catalyses cytidine(1402) in 16S rRNA + S-adenosyl-L-methionine = N(4)-methylcytidine(1402) in 16S rRNA + S-adenosyl-L-homocysteine + H(+). Its function is as follows. Specifically methylates the N4 position of cytidine in position 1402 (C1402) of 16S rRNA. The sequence is that of Ribosomal RNA small subunit methyltransferase H from Neisseria gonorrhoeae (strain ATCC 700825 / FA 1090).